We begin with the raw amino-acid sequence, 85 residues long: High-potential iron-sulfur protein (85 aa).

C43, C46, C63, and C77 together coordinate [4Fe-4S] cluster.

Belongs to the high-potential iron-sulfur protein (HiPIP) family. In terms of assembly, homodimer.

The protein localises to the periplasm. Functionally, specific class of high-redox-potential 4Fe-4S ferredoxins. Functions in anaerobic electron transport in most purple and in some other photosynthetic bacteria and in at least one genus (Paracoccus) of halophilic, denitrifying bacteria. The polypeptide is High-potential iron-sulfur protein (Allochromatium warmingii (Chromatium warmingii)).